A 1100-amino-acid polypeptide reads, in one-letter code: Tyrosine-protein kinase JAK3 (1100 aa).

The tract at residues Met1–Arg223 is cytokine/interferon/growth hormone receptors. Ser17 carries the phosphoserine modification. Residues Gly24–Arg353 enclose the FERM domain. The SH2; atypical domain occupies Leu372–Cys472. One can recognise a Protein kinase 1 domain in the interval Leu517–Ile777. Tyr781 carries the post-translational modification Phosphotyrosine; by autocatalysis. One can recognise a Protein kinase 2 domain in the interval Leu818 to Leu1091. Residues Leu824–Val832 and Lys851 each bind ATP. 2 positions are modified to phosphotyrosine: Tyr900 and Tyr935. Asp945 serves as the catalytic Proton acceptor. A phosphotyrosine; by autocatalysis mark is found at Tyr976 and Tyr977.

It belongs to the protein kinase superfamily. Tyr protein kinase family. JAK subfamily. Interacts with STAM2 and MYO18A. Interacts with SHB. Interacts with CD69. Autophosphorylated, leading to regulate its activity. IL2 promotes phosphorylation on tyrosine residues, including autophosphorylation on Tyr-781. Dephosphorylation of Tyr-976 and Tyr-977 by PTPN2 negatively regulates cytokine-mediated signaling. In contrast with the ubiquitous expression of the other JAKs, JAK3 is predominantly expressed in hematopoietic tissues.

It is found in the endomembrane system. The protein resides in the cytoplasm. The enzyme catalyses L-tyrosyl-[protein] + ATP = O-phospho-L-tyrosyl-[protein] + ADP + H(+). Functionally, non-receptor tyrosine kinase involved in various processes such as cell growth, development, or differentiation. Mediates essential signaling events in both innate and adaptive immunity and plays a crucial role in hematopoiesis during T-cells development. In the cytoplasm, plays a pivotal role in signal transduction via its association with type I receptors sharing the common subunit gamma such as IL2R, IL4R, IL7R, IL9R, IL15R and IL21R. Following ligand binding to cell surface receptors, phosphorylates specific tyrosine residues on the cytoplasmic tails of the receptor, creating docking sites for STATs proteins. Subsequently, phosphorylates the STATs proteins once they are recruited to the receptor. Phosphorylated STATs then form homodimer or heterodimers and translocate to the nucleus to activate gene transcription. For example, upon IL2R activation by IL2, JAK1 and JAK3 molecules bind to IL2R beta (IL2RB) and gamma chain (IL2RG) subunits inducing the tyrosine phosphorylation of both receptor subunits on their cytoplasmic domain. Then, STAT5A and STAT5B are recruited, phosphorylated and activated by JAK1 and JAK3. Once activated, dimerized STAT5 translocates to the nucleus and promotes the transcription of specific target genes in a cytokine-specific fashion. The chain is Tyrosine-protein kinase JAK3 from Rattus norvegicus (Rat).